Here is a 528-residue protein sequence, read N- to C-terminus: Peptide chain release factor 3 (528 aa).

One can recognise a tr-type G domain in the interval 11-279; it reads EKRRTFAIIS…GLVEWAPKPL (269 aa). Residues 20-27, 88-92, and 142-145 each bind GTP; these read SHPDAGKT, DTPGH, and NKCD.

The protein belongs to the TRAFAC class translation factor GTPase superfamily. Classic translation factor GTPase family. PrfC subfamily.

The protein resides in the cytoplasm. Functionally, increases the formation of ribosomal termination complexes and stimulates activities of RF-1 and RF-2. It binds guanine nucleotides and has strong preference for UGA stop codons. It may interact directly with the ribosome. The stimulation of RF-1 and RF-2 is significantly reduced by GTP and GDP, but not by GMP. The chain is Peptide chain release factor 3 from Psychromonas ingrahamii (strain DSM 17664 / CCUG 51855 / 37).